The chain runs to 59 residues: Large ribosomal subunit protein uL30 (59 aa).

It belongs to the universal ribosomal protein uL30 family. As to quaternary structure, part of the 50S ribosomal subunit.

The chain is Large ribosomal subunit protein uL30 from Clostridium beijerinckii (strain ATCC 51743 / NCIMB 8052) (Clostridium acetobutylicum).